Consider the following 756-residue polypeptide: Serine/threonine-protein kinase tousled-like 1-B (756 aa).

2 stretches are compositionally biased toward low complexity: residues 1–12 (MSVQSNSNSSGS) and 23–34 (STGSPTPGSVSP). 2 disordered regions span residues 1–56 (MSVQ…LDPR) and 69–185 (VSGN…QNSS). Residues 45 to 56 (EGMDELHSLDPR) show a composition bias toward basic and acidic residues. The segment covering 72-85 (NTGGSTGSASGGPK) has biased composition (gly residues). A compositionally biased stretch (low complexity) spans 93–103 (SSHSFGSLGSS). The segment covering 104–120 (SDKESETPEKKHFESSR) has biased composition (basic and acidic residues). Residues 243 to 268 (DLRRQIDEQQKLLERFKERLNKCTTM) are a coiled coil. The interval 339–375 (KLLAKRKPSSTPSSQSPTPNESKQRKTKAVNGADNDP) is disordered. The span at 347–357 (SSTPSSQSPTP) shows a compositional bias: low complexity. A coiled-coil region spans residues 397–435 (FKLRLGHLKKEEAEIQAELERLERVRNLHIRELKRINNE). Residues 450–728 (YLLLHLLGRG…VHQLGSDSYL (279 aa)) form the Protein kinase domain. ATP is bound by residues 456–464 (LGRGGFSEV) and Lys-479. The Proton acceptor role is filled by Asp-580. Residues 734–756 (RSNSSGNLQATPASPAPSGIISY) are disordered. The segment covering 735–745 (SNSSGNLQATP) has biased composition (polar residues).

It belongs to the protein kinase superfamily. Ser/Thr protein kinase family. Requires Mg(2+) as cofactor.

Its subcellular location is the nucleus. The enzyme catalyses L-seryl-[protein] + ATP = O-phospho-L-seryl-[protein] + ADP + H(+). It carries out the reaction L-threonyl-[protein] + ATP = O-phospho-L-threonyl-[protein] + ADP + H(+). The polypeptide is Serine/threonine-protein kinase tousled-like 1-B (tlk1b) (Danio rerio (Zebrafish)).